The sequence spans 288 residues: ATP synthase gamma chain (288 aa).

It belongs to the ATPase gamma chain family. As to quaternary structure, F-type ATPases have 2 components, CF(1) - the catalytic core - and CF(0) - the membrane proton channel. CF(1) has five subunits: alpha(3), beta(3), gamma(1), delta(1), epsilon(1). CF(0) has three main subunits: a, b and c.

It localises to the cell inner membrane. Produces ATP from ADP in the presence of a proton gradient across the membrane. The gamma chain is believed to be important in regulating ATPase activity and the flow of protons through the CF(0) complex. The sequence is that of ATP synthase gamma chain from Rickettsia prowazekii (strain Madrid E).